Reading from the N-terminus, the 229-residue chain is 3,4-dihydroxy-2-butanone 4-phosphate synthase (229 aa).

D-ribulose 5-phosphate-binding positions include 28–29 (RE), Asp-33, 164–168 (RGGHT), and Glu-188. Residue Glu-29 coordinates Mg(2+). Position 167 (His-167) interacts with Mg(2+).

Belongs to the DHBP synthase family. In terms of assembly, homodimer. Mg(2+) serves as cofactor. It depends on Mn(2+) as a cofactor.

It catalyses the reaction D-ribulose 5-phosphate = (2S)-2-hydroxy-3-oxobutyl phosphate + formate + H(+). Its pathway is cofactor biosynthesis; riboflavin biosynthesis; 2-hydroxy-3-oxobutyl phosphate from D-ribulose 5-phosphate: step 1/1. Catalyzes the conversion of D-ribulose 5-phosphate to formate and 3,4-dihydroxy-2-butanone 4-phosphate. This chain is 3,4-dihydroxy-2-butanone 4-phosphate synthase, found in Methanothermobacter thermautotrophicus (strain ATCC 29096 / DSM 1053 / JCM 10044 / NBRC 100330 / Delta H) (Methanobacterium thermoautotrophicum).